Consider the following 276-residue polypeptide: Large ribosomal subunit protein uL2 (276 aa).

Disordered regions lie at residues 1 to 20 (MGIK…TTND) and 219 to 276 (TVRG…RRKK). Over residues 7 to 20 (NPTTNGRRNMTTND) the composition is skewed to polar residues.

Belongs to the universal ribosomal protein uL2 family. In terms of assembly, part of the 50S ribosomal subunit. Forms a bridge to the 30S subunit in the 70S ribosome.

Functionally, one of the primary rRNA binding proteins. Required for association of the 30S and 50S subunits to form the 70S ribosome, for tRNA binding and peptide bond formation. It has been suggested to have peptidyltransferase activity; this is somewhat controversial. Makes several contacts with the 16S rRNA in the 70S ribosome. The chain is Large ribosomal subunit protein uL2 from Bacillus anthracis (strain A0248).